A 261-amino-acid chain; its full sequence is MAQKTSGLIQRCRFLLLMILFLPHVMTSSVLSVNGKTENYILDTEPGLQESLKCAVQNHIRDEELLWYREDGRVDLKSGNKINSSSVCVSGISEDDNGITFTCKLQRNQSVSISVVLNVTFPPLLSGNDFQTAEEGSDVKLVCNVKSNPQAQMMWYKNNGILNLENHHQIQQTSEYFQLSITKVKKSDNGTYSCIANSLIETKTKDFHLIVKDKGSTVPIEPIIAACVVVFLTLVFGVIARRKRIMKLCRKDQGPQCRTAL.

Positions 1 to 27 are cleaved as a signal peptide; sequence MAQKTSGLIQRCRFLLLMILFLPHVMT. The 87-residue stretch at 28–114 folds into the Ig-like C2-type 1 domain; it reads SSVLSVNGKT…LQRNQSVSIS (87 aa). Over 28-219 the chain is Extracellular; it reads SSVLSVNGKT…IVKDKGSTVP (192 aa). C54 and C103 are joined by a disulfide. N-linked (GlcNAc...) asparagine glycosylation is found at N83, N108, N118, and N189. In terms of domain architecture, Ig-like C2-type 2 spans 122–208; the sequence is PPLLSGNDFQ…LIETKTKDFH (87 aa). C143 and C194 form a disulfide bridge. A helical transmembrane segment spans residues 220-240; it reads IEPIIAACVVVFLTLVFGVIA. Topologically, residues 241–261 are cytoplasmic; the sequence is RRKRIMKLCRKDQGPQCRTAL.

In terms of assembly, homodimer. N-glycosylated.

It localises to the cell membrane. The protein resides in the cytoplasm. Functionally, may control cell-cell adhesion, cell migration and proliferation, cell morphology, and protects renal epithelial cells from oxidative cell injury to promote cell survival. This Bos taurus (Bovine) protein is Transmembrane and immunoglobulin domain-containing protein 1.